The following is a 183-amino-acid chain: SsrA-binding protein (183 aa).

The tract at residues methionine 1–asparagine 27 is disordered. Over residues alanine 13–asparagine 27 the composition is skewed to basic residues.

The protein belongs to the SmpB family.

The protein resides in the cytoplasm. Its function is as follows. Required for rescue of stalled ribosomes mediated by trans-translation. Binds to transfer-messenger RNA (tmRNA), required for stable association of tmRNA with ribosomes. tmRNA and SmpB together mimic tRNA shape, replacing the anticodon stem-loop with SmpB. tmRNA is encoded by the ssrA gene; the 2 termini fold to resemble tRNA(Ala) and it encodes a 'tag peptide', a short internal open reading frame. During trans-translation Ala-aminoacylated tmRNA acts like a tRNA, entering the A-site of stalled ribosomes, displacing the stalled mRNA. The ribosome then switches to translate the ORF on the tmRNA; the nascent peptide is terminated with the 'tag peptide' encoded by the tmRNA and targeted for degradation. The ribosome is freed to recommence translation, which seems to be the essential function of trans-translation. This Corynebacterium kroppenstedtii (strain DSM 44385 / JCM 11950 / CIP 105744 / CCUG 35717) protein is SsrA-binding protein.